The sequence spans 161 residues: Protein-export protein SecB (161 aa).

It belongs to the SecB family. Homotetramer, a dimer of dimers. One homotetramer interacts with 1 SecA dimer.

The protein resides in the cytoplasm. One of the proteins required for the normal export of preproteins out of the cell cytoplasm. It is a molecular chaperone that binds to a subset of precursor proteins, maintaining them in a translocation-competent state. It also specifically binds to its receptor SecA. The protein is Protein-export protein SecB of Coxiella burnetii (strain Dugway 5J108-111).